A 398-amino-acid chain; its full sequence is GTP cyclohydrolase-2 (398 aa).

Positions 1 to 172 (MNTPTHTHPH…TAAACASTTE (172 aa)) are unknown. A GTP cyclohydrolase II region spans residues 173-398 (YELVTRTPVP…VKPIAKTGHA (226 aa)). 220–224 (RVHSS) lines the GTP pocket. Residues C225, C236, and C238 each contribute to the Zn(2+) site. Residues Q241, 263–265 (EGR), and T285 contribute to the GTP site. The active-site Proton acceptor is D297. The Nucleophile role is filled by R299. 2 residues coordinate GTP: S320 and K325. Residues 375–398 (QRPQDPSETVDGETVKPIAKTGHA) form a disordered region.

This sequence in the C-terminal section; belongs to the GTP cyclohydrolase II family. The cofactor is Zn(2+).

It catalyses the reaction GTP + 4 H2O = 2,5-diamino-6-hydroxy-4-(5-phosphoribosylamino)-pyrimidine + formate + 2 phosphate + 3 H(+). It functions in the pathway cofactor biosynthesis; riboflavin biosynthesis; 5-amino-6-(D-ribitylamino)uracil from GTP: step 1/4. In terms of biological role, catalyzes the conversion of GTP to 2,5-diamino-6-ribosylamino-4(3H)-pyrimidinone 5'-phosphate (DARP), formate and pyrophosphate. This chain is GTP cyclohydrolase-2 (ribA), found in Xylella fastidiosa (strain Temecula1 / ATCC 700964).